The chain runs to 750 residues: Elastin (750 aa).

The first 24 residues, 1–24 (ARQAAAPLLPGVLLLFSILPASQQ), serve as a signal peptide directing secretion. A 4-hydroxyproline mark is found at Pro32, Pro67, Pro102, Pro176, Pro189, Pro192, and Pro211. The stretch at 83-127 (GAGVGGLGAGLGAFPGAAFPGAASAAALKAAAKAGAGLGGVGGIG) is repeat 1. An 8 X tandem repeats region spans residues 83 to 686 (GAGVGGLGAG…GVGGLGVGGL (604 aa)). 7 tandem repeats follow at residues 219–262 (VNGL…AGVL), 263–318 (PGAG…GVPG), 319–393 (VVPG…VPGV), 394–482 (PGVP…VPGV), 483–554 (GVPG…VGGL), 555–619 (VPGV…PGVT), and 620–686 (PGVG…VGGL). Pro276, Pro345, Pro363, Pro368, Pro441, Pro455, and Pro480 each carry 4-hydroxyproline. 3 positions are modified to 4-hydroxyproline: Pro576, Pro635, and Pro720. Cys739 and Cys745 are joined by a disulfide.

It belongs to the elastin family. As to quaternary structure, the polymeric elastin chains are cross-linked together into an extensible 3D network. Elastin is formed through the cross-linking of its soluble precursor tropoelastin. Cross-linking is initiated through the action of lysyl oxidase on exposed lysines to form allysine. Subsequent spontaneous condensation reactions with other allysine or unmodified lysine residues result in various bi-, tri-, and tetrafunctional cross-links. The most abundant cross-links in mature elastin fibers are lysinonorleucine, allysine aldol, desmosine, and isodesmosine. Post-translationally, hydroxylated on proline residues. In terms of processing, hydroxylation on proline residues within the sequence motif, GXPG, is most likely to be 4-hydroxy as this fits the requirement for 4-hydroxylation in vertebrates.

The protein localises to the secreted. Its subcellular location is the extracellular space. It localises to the extracellular matrix. Major structural protein of tissues such as aorta and nuchal ligament, which must expand rapidly and recover completely. This Gallus gallus (Chicken) protein is Elastin (ELN).